The primary structure comprises 558 residues: 2-isopropylmalate synthase (558 aa).

The Pyruvate carboxyltransferase domain maps to 28-304; sequence PIWCSVDLRD…DPELEFSNLN (277 aa). Mg(2+) contacts are provided by aspartate 37, histidine 243, histidine 245, and asparagine 279. Residues 438–558 form a regulatory domain region; it reads NRSPYYLKNY…VSALNRSKLK (121 aa).

Belongs to the alpha-IPM synthase/homocitrate synthase family. LeuA type 2 subfamily. As to quaternary structure, homodimer. It depends on Mg(2+) as a cofactor.

The protein localises to the cytoplasm. The catalysed reaction is 3-methyl-2-oxobutanoate + acetyl-CoA + H2O = (2S)-2-isopropylmalate + CoA + H(+). It participates in amino-acid biosynthesis; L-leucine biosynthesis; L-leucine from 3-methyl-2-oxobutanoate: step 1/4. Functionally, catalyzes the condensation of the acetyl group of acetyl-CoA with 3-methyl-2-oxobutanoate (2-ketoisovalerate) to form 3-carboxy-3-hydroxy-4-methylpentanoate (2-isopropylmalate). The chain is 2-isopropylmalate synthase from Clostridium acetobutylicum (strain ATCC 824 / DSM 792 / JCM 1419 / IAM 19013 / LMG 5710 / NBRC 13948 / NRRL B-527 / VKM B-1787 / 2291 / W).